The primary structure comprises 905 residues: Core protein VP3 (905 aa).

It belongs to the orbivirus VP3 family.

The protein localises to the virion. Functionally, the VP3 protein is one of the five proteins (with VP1, VP4, VP6 and VP7) which form the inner capsid of the virus. This is Core protein VP3 (Segment-3) from African horse sickness virus (AHSV).